We begin with the raw amino-acid sequence, 530 residues long: UDP-glucuronosyltransferase 2B15 (530 aa).

Positions 1-23 are cleaved as a signal peptide; that stretch reads MSLKWTSVFLLIQLSCYFSSGSC. N65 carries an N-linked (GlcNAc...) asparagine glycan. The residue at position 136 (K136) is an N6-succinyllysine. N-linked (GlcNAc...) asparagine glycosylation is found at N316 and N483. The helical transmembrane segment at 495 to 515 threads the bilayer; the sequence is IAFLLACVATVIFIITKFCLF.

This sequence belongs to the UDP-glycosyltransferase family. As to expression, expressed in many tissues. Present in liver, prostate and testis.

The protein resides in the endoplasmic reticulum membrane. It catalyses the reaction glucuronate acceptor + UDP-alpha-D-glucuronate = acceptor beta-D-glucuronoside + UDP + H(+). The catalysed reaction is 17alpha-estradiol + UDP-alpha-D-glucuronate = 17alpha-estradiol 3-O-(beta-D-glucuronate) + UDP + H(+). It carries out the reaction 16alpha,17alpha-estriol + UDP-alpha-D-glucuronate = 16alpha,17alpha-estriol 3-O-(beta-D-glucuronate) + UDP + H(+). The enzyme catalyses 17beta-hydroxy-5alpha-androstan-3-one + UDP-alpha-D-glucuronate = 5alpha-dihydrotestosterone 17-O-(beta-D-glucuronate) + UDP + H(+). UDP-glucuronosyltransferase (UGT) that catalyzes phase II biotransformation reactions in which lipophilic substrates are conjugated with glucuronic acid to increase the metabolite's water solubility, thereby facilitating excretion into either the urine or bile. Essential for the elimination and detoxification of drugs, xenobiotics and endogenous compounds. Catalyzes the glucuronidation of endogenous steroid hormones such as androgens (testosterone, androsterone) and estrogens (estradiol, epiestradiol, estriol, catechol estrogens). Displays glucuronidation activity toward several classes of xenobiotic substrates, including phenolic compounds (eugenol, 4-nitrophenol, 4-hydroxybiphenyl) and phenylpropanoids (naringenin, coumarins). Catalyzes the glucuronidation of monoterpenoid alcohols such as borneol, menthol and isomenthol, a class of natural compounds used in essential oils. The polypeptide is UDP-glucuronosyltransferase 2B15 (Homo sapiens (Human)).